Consider the following 335-residue polypeptide: Atypical chemokine receptor 1 (335 aa).

The Extracellular segment spans residues Met-1–Pro-62. 3 N-linked (GlcNAc...) asparagine glycosylation sites follow: Asn-16, Asn-26, and Asn-32. Intrachain disulfides connect Cys-50-Cys-275 and Cys-128-Cys-194. The helical transmembrane segment at Phe-63–Phe-83 threads the bilayer. Residues Arg-84–Gly-94 lie on the Cytoplasmic side of the membrane. The helical transmembrane segment at Trp-95–Leu-115 threads the bilayer. At Ala-116–Cys-128 the chain is on the extracellular side. The helical transmembrane segment at Ser-129–Leu-152 threads the bilayer. The Cytoplasmic portion of the chain corresponds to Gly-153 to Thr-165. Residues Leu-166–Ala-186 form a helical membrane-spanning segment. Over Ser-187–Gln-206 the chain is Extracellular. The chain crosses the membrane as a helical span at residues Ala-207–Ala-227. At Lys-228–Asn-243 the chain is on the cytoplasmic side. The chain crosses the membrane as a helical span at residues Ile-244 to Leu-264. At Val-265–Asn-286 the chain is on the extracellular side. Residues Leu-287–Cys-307 traverse the membrane as a helical segment. Topologically, residues His-308–Ser-335 are cytoplasmic.

The protein belongs to the G-protein coupled receptor 1 family. Atypical chemokine receptor subfamily. (Microbial infection) Interacts (via N-terminal extracellular domain) with Plasmodium knowlesi Duffy receptor alpha form (DBPalpha) (via region II).

It localises to the early endosome. The protein localises to the recycling endosome. The protein resides in the membrane. Its function is as follows. Atypical chemokine receptor that controls chemokine levels and localization via high-affinity chemokine binding that is uncoupled from classic ligand-driven signal transduction cascades, resulting instead in chemokine sequestration, degradation, or transcytosis. Also known as interceptor (internalizing receptor) or chemokine-scavenging receptor or chemokine decoy receptor. Has a promiscuous chemokine-binding profile, interacting with inflammatory chemokines of both the CXC and the CC subfamilies but not with homeostatic chemokines. Acts as a receptor for chemokines including CCL2, CCL5, CCL7, CCL11, CCL13, CCL14, CCL17, CXCL5, CXCL6, IL8/CXCL8, CXCL11, GRO, RANTES, MCP-1 and TARC. May regulate chemokine bioavailability and, consequently, leukocyte recruitment through two distinct mechanisms: when expressed in endothelial cells, it sustains the abluminal to luminal transcytosis of tissue-derived chemokines and their subsequent presentation to circulating leukocytes; when expressed in erythrocytes, serves as blood reservoir of cognate chemokines but also as a chemokine sink, buffering potential surges in plasma chemokine levels. Functionally, (Microbial infection) Acts as a receptor for the malaria parasite Plasmodium knowlesi. The chain is Atypical chemokine receptor 1 (ACKR1) from Macaca mulatta (Rhesus macaque).